The following is a 219-amino-acid chain: Large ribosomal subunit protein uL3 (219 aa).

Gln-151 carries the N5-methylglutamine modification.

The protein belongs to the universal ribosomal protein uL3 family. Part of the 50S ribosomal subunit. Forms a cluster with proteins L14 and L19. Post-translationally, methylated by PrmB.

Its function is as follows. One of the primary rRNA binding proteins, it binds directly near the 3'-end of the 23S rRNA, where it nucleates assembly of the 50S subunit. In Blochmanniella floridana, this protein is Large ribosomal subunit protein uL3.